The primary structure comprises 486 residues: MTTFYTVVNWLVILGYWLLIAGVTLRILMKRRAVPSAMAWLLIIYILPLVGIIAYLSFGELHLGKRRAERARAMWPSTAKWLNDLKACKHIFAEDNSPVAESLFKLCERRQGIGGVKGNQLQLLTESDDVMQALIRDIQLARHNIEMVFYIWQPGGMADSVAESLMAAARRGVHCRLMLDSAGSVAFFRSPWAAMMRNAGIEVVEALKVNLMRVFLRRMDLRQHRKMVMIDNYIAYTGSMNMVDPRYFKQDSGVGQWIDLMARMEGPVATSMGIVYSCDWEIETGKRILPPPPDVNIMPFEEASGHTIHTIASGPGFPEDLIHQALLTAAYAAKEHLIMTTPYFVPSDDLLHAICTAAQRGVDVSIILPRKNDSLLVGWASRAFFTELLAAGVKIYQFEGGLLHTKSVLVDGELSLVGTVNLDMRSLWLNFEITLVIDDAGFGSDLAAVQDDYISRSRLLDARRWLKRPLWQRIVERLFYFFSPLL.

2 consecutive transmembrane segments (helical) span residues 3-23 (TFYT…IAGV) and 38-58 (MAWL…YLSF). PLD phosphodiesterase domains follow at residues 219–246 (MDLR…VDPR) and 399–426 (EGGL…DMRS). Residues histidine 224, lysine 226, aspartate 231, histidine 404, lysine 406, and aspartate 411 contribute to the active site.

Belongs to the phospholipase D family. Cardiolipin synthase subfamily. ClsA sub-subfamily.

The protein resides in the cell inner membrane. The enzyme catalyses 2 a 1,2-diacyl-sn-glycero-3-phospho-(1'-sn-glycerol) = a cardiolipin + glycerol. Functionally, catalyzes the reversible phosphatidyl group transfer from one phosphatidylglycerol molecule to another to form cardiolipin (CL) (diphosphatidylglycerol) and glycerol. The sequence is that of Cardiolipin synthase A from Klebsiella pneumoniae (strain 342).